The sequence spans 442 residues: UDP-N-acetylmuramoylalanine--D-glutamate ligase (442 aa).

115–121 contacts ATP; sequence GSNGKST.

The protein belongs to the MurCDEF family.

The protein resides in the cytoplasm. It catalyses the reaction UDP-N-acetyl-alpha-D-muramoyl-L-alanine + D-glutamate + ATP = UDP-N-acetyl-alpha-D-muramoyl-L-alanyl-D-glutamate + ADP + phosphate + H(+). Its pathway is cell wall biogenesis; peptidoglycan biosynthesis. Cell wall formation. Catalyzes the addition of glutamate to the nucleotide precursor UDP-N-acetylmuramoyl-L-alanine (UMA). The polypeptide is UDP-N-acetylmuramoylalanine--D-glutamate ligase (Vibrio vulnificus (strain YJ016)).